The chain runs to 106 residues: uncharacterized protein (106 aa).

The protein belongs to the HesB/IscA family.

This is an uncharacterized protein from Rhodobacter capsulatus (Rhodopseudomonas capsulata).